We begin with the raw amino-acid sequence, 190 residues long: Vespryn-21 (190 aa).

A signal peptide spans 1–20; sequence MLLFTLCFFADLENGGKALA. Residues 21–127 form the B30.2/SPRY domain; the sequence is SPPGKWQKAD…LIWQRGLWFL (107 aa). The propeptide occupies 128–190; that stretch reads QRLETDSDKL…LGGGVSLTNL (63 aa).

This sequence belongs to the ohanin/vespryn family. In terms of tissue distribution, expressed by the venom gland.

The protein resides in the secreted. Neurotoxin that produces dose-dependent hypolocomotion and hyperalgesia in mice. May directly act on the central nervous system, as it is 6500-fold more potent when administered intracerebroventricularly than intraperitoneal. The chain is Vespryn-21 from Drysdalia coronoides (White-lipped snake).